A 542-amino-acid polypeptide reads, in one-letter code: Nuclear speckle splicing regulatory protein 1 (542 aa).

The interval 21-53 (RVLQKPSVFGSDSDDDETSVSESLQREAAKKQA) is disordered. Serine 27, serine 31, and serine 33 each carry phosphoserine. Positions 103–172 (IHNLLKAVEI…RAAALEAHLD (70 aa)) form a coiled coil. The necessary for alternative splicing activity stretch occupies residues 105-169 (NLLKAVEIRK…REKRAAALEA (65 aa)). Residues 190 to 516 (AVGEEAAPKS…FAKRSNEETV (327 aa)) form a disordered region. Residues lysine 198 and lysine 209 each participate in a glycyl lysine isopeptide (Lys-Gly) (interchain with G-Cter in SUMO2) cross-link. Residues 200 to 217 (SFREARTVIKEEKLRGYP) are compositionally biased toward basic and acidic residues. Residues 223-232 (ESRPPQQSCV) show a composition bias toward polar residues. The segment covering 239 to 256 (EAEENPDADREFDDESSE) has biased composition (acidic residues). A phosphoserine mark is found at serine 254 and serine 255. Over residues 257 to 271 (DGEKRDHKVKSRGED) the composition is skewed to basic and acidic residues. N6-acetyllysine is present on lysine 277. Positions 277-288 (KHPKHHKNRAHS) are enriched in basic residues. Lysine 280 participates in a covalent cross-link: Glycyl lysine isopeptide (Lys-Gly) (interchain with G-Cter in SUMO2). Basic and acidic residues-rich tracts occupy residues 309–335 (RGHEHQDRQSRDQESCHKDRSHREEKS), 343–475 (SHKD…KPSH), and 485–501 (RLAEERPEKGSEQERPP). Positions 372-413 (KREKYSSREQERDRQRNDHDRYSEKEKKRKEKEEHTKARRER) form a coiled coil. At serine 443 the chain carries Phosphoserine.

The protein belongs to the NSRP1 family. In terms of assembly, interacts (via C-terminus) with SRSF1. Interacts (via C-terminus) with SRSF2.

The protein resides in the nucleus. The protein localises to the nucleus speckle. RNA-binding protein that mediates pre-mRNA alternative splicing regulation. This is Nuclear speckle splicing regulatory protein 1 (Nsrp1) from Mus musculus (Mouse).